Reading from the N-terminus, the 157-residue chain is MSWAKQRVPFLDDDDGEEENDVQDDVDSPVPTRPLVIDEDAEPAAGTSGGLEGGGGDDEDGEDGHALPDLDDDLLLQFEPMLPRVYDLLLPSLDARLNFVNAGQKYAAFLKYVHGDCATCSHGEILREKTQLLTAIVSKLMDINGILEGKDESAPGK.

A disordered region spans residues 1-69 (MSWAKQRVPF…DGEDGHALPD (69 aa)). Positions 11 to 27 (LDDDDGEEENDVQDDVD) are enriched in acidic residues.

Belongs to the herpesviridae TRM2 protein family. As to quaternary structure, associates with TRM1 and TRM3 to form the tripartite terminase complex.

The protein localises to the host nucleus. Functionally, component of the molecular motor that translocates viral genomic DNA in empty capsid during DNA packaging. Forms a tripartite terminase complex together with TRM1 and TRM3 in the host cytoplasm. Once the complex reaches the host nucleus, it interacts with the capsid portal vertex. This portal forms a ring in which genomic DNA is translocated into the capsid. The sequence is that of Tripartite terminase subunit 2 from Homo sapiens (Human).